A 417-amino-acid polypeptide reads, in one-letter code: NADH-quinone oxidoreductase subunit D (417 aa).

It belongs to the complex I 49 kDa subunit family. As to quaternary structure, NDH-1 is composed of 14 different subunits. Subunits NuoB, C, D, E, F, and G constitute the peripheral sector of the complex.

The protein resides in the cell inner membrane. It catalyses the reaction a quinone + NADH + 5 H(+)(in) = a quinol + NAD(+) + 4 H(+)(out). Its function is as follows. NDH-1 shuttles electrons from NADH, via FMN and iron-sulfur (Fe-S) centers, to quinones in the respiratory chain. The immediate electron acceptor for the enzyme in this species is believed to be ubiquinone. Couples the redox reaction to proton translocation (for every two electrons transferred, four hydrogen ions are translocated across the cytoplasmic membrane), and thus conserves the redox energy in a proton gradient. The protein is NADH-quinone oxidoreductase subunit D of Verminephrobacter eiseniae (strain EF01-2).